The chain runs to 249 residues: MIT domain-containing protein 1 (249 aa).

Residues 8–86 (QDPQSTAAAT…KYLDQEKEDG (79 aa)) form the MIT domain. The important for association with membranes stretch occupies residues 168-231 (RGLQEIEESL…SLGYCDFDLR (64 aa)).

In terms of assembly, homodimer. Interacts (via MIT domain) with CHMP1A, CHMP1B, CHMP2A and IST1.

It localises to the late endosome membrane. The protein localises to the midbody. The protein resides in the membrane. In terms of biological role, required for efficient abscission at the end of cytokinesis, together with components of the ESCRT-III complex. The sequence is that of MIT domain-containing protein 1 (MITD1) from Homo sapiens (Human).